Consider the following 189-residue polypeptide: MSQVIIAIILLGLLALAFGALLGYAAEKFKVEGDPIIDQAEALLPQTQCGQCGYPGCRPYAEAIANGEKINKCPPGGTATMEKLAELMGVDPEPLTANAETQVKKVAFIREAECIGCTKCIQACPVDAILGTGKQMHTVITDYCTGCDLCVEPCPVDCIDMIPVAETLQNWSWQLNAIPVVNISEESKC.

The interval 1-26 (MSQVIIAIILLGLLALAFGALLGYAA) is hydrophobic. Positions 32–90 (EGDPIIDQAEALLPQTQCGQCGYPGCRPYAEAIANGEKINKCPPGGTATMEKLAELMGV) constitute a 4Fe-4S domain. Positions 49, 52, 57, 73, 114, 117, 120, 124, 144, 147, 150, and 154 each coordinate [4Fe-4S] cluster. 4Fe-4S ferredoxin-type domains follow at residues 105–134 (KVAFIREAECIGCTKCIQACPVDAILGTGK) and 135–164 (QMHTVITDYCTGCDLCVEPCPVDCIDMIPV).

The protein belongs to the 4Fe4S bacterial-type ferredoxin family. RnfB subfamily. In terms of assembly, the complex is composed of six subunits: RnfA, RnfB, RnfC, RnfD, RnfE and RnfG. [4Fe-4S] cluster serves as cofactor.

It is found in the cell inner membrane. Its function is as follows. Part of a membrane-bound complex that couples electron transfer with translocation of ions across the membrane. This is Ion-translocating oxidoreductase complex subunit B from Shewanella loihica (strain ATCC BAA-1088 / PV-4).